Reading from the N-terminus, the 502-residue chain is UDP-N-acetylmuramate--L-alanine ligase (502 aa).

Position 120–126 (120–126 (GTHGKTS)) interacts with ATP.

It belongs to the MurCDEF family.

The protein resides in the cytoplasm. The catalysed reaction is UDP-N-acetyl-alpha-D-muramate + L-alanine + ATP = UDP-N-acetyl-alpha-D-muramoyl-L-alanine + ADP + phosphate + H(+). The protein operates within cell wall biogenesis; peptidoglycan biosynthesis. Cell wall formation. This Rhodococcus erythropolis (strain PR4 / NBRC 100887) protein is UDP-N-acetylmuramate--L-alanine ligase.